The following is a 1696-amino-acid chain: uncharacterized protein (1696 aa).

4 disordered regions span residues 1 to 113, 151 to 194, 258 to 284, and 299 to 376; these read MDSS…HPQY, DSWT…SRSR, DVTRSSASREGARETRNEGRTLYPEKK, and GRRE…KQRG. A compositionally biased stretch (pro residues) spans 21 to 42; the sequence is LHPPSAPLPPPPPLPPPPPPRQ. The span at 52–61 shows a compositional bias: polar residues; that stretch reads GRSTQSNGQR. Residues 96–113 show a composition bias toward low complexity; it reads QQQHQPLSLQQQQQHPQY. The segment covering 170–183 has biased composition (polar residues); that stretch reads RNYQYDYSRNSSGV. Basic and acidic residues-rich tracts occupy residues 267–284, 325–340, and 358–376; these read EGARETRNEGRTLYPEKK, ETPRSYKNSRENEWSR, and RGKEHLGHSDRGLVEKQRG. Serine 378 carries the post-translational modification Phosphoserine. Disordered regions lie at residues 419-483, 688-724, 1063-1090, 1184-1211, 1319-1340, 1361-1429, and 1658-1696; these read RALL…GGKL, SDIGGIEDDNKRIDKNVDSLSPENDSSRGRPMGLDSP, IKHKEDNCTESVEVETHEEKAKLPGGTS, TSKSIEKIESSGGTSEHRTPETDIVAGS, GEAVSSDGQVSGTEIPGGSGVR, VVSV…SDAS, and SESRCNQSISLPDDALDTRSAANMVSERPSSSAFSDSGM. 2 stretches are compositionally biased toward basic and acidic residues: residues 421-436 and 695-704; these read LLSDKNEKVSVTERNG and DDNKRIDKNV. Serine 708 is modified (phosphoserine). The span at 1184-1204 shows a compositional bias: basic and acidic residues; it reads TSKSIEKIESSGGTSEHRTPE. Basic and acidic residues predominate over residues 1361–1370; sequence VVSVPHRDPQ. Polar residues-rich tracts occupy residues 1389–1398, 1658–1667, and 1677–1696; these read NYSTQKSYPS, SESRCNQSIS, and SAANMVSERPSSSAFSDSGM.

This is an uncharacterized protein from Arabidopsis thaliana (Mouse-ear cress).